A 407-amino-acid chain; its full sequence is Protein ZNF365 (407 aa).

Serine 16 is modified (phosphoserine). The C2H2-type; degenerate zinc-finger motif lies at 26–51 (LRCPRCGDHTRFRSLSSLRAHLEFSH). Serine 138 is modified (phosphoserine). The stretch at 169–297 (VEAVDRTIEK…QLEYYQSQQA (129 aa)) forms a coiled coil. Threonine 175 carries the phosphothreonine modification. Positions 347 to 392 (LKKAKDDRASMQPAKAIHEQAESSRDLCRPPKKGELLGFGRKGNIR) are disordered. The span at 362–381 (AIHEQAESSRDLCRPPKKGE) shows a compositional bias: basic and acidic residues. The residue at position 369 (serine 369) is a Phosphoserine.

Homodimer. Interacts with NDE1 and NDEL1. Does not interact with TUBG1. Interacts with DISC1. Interacts with PARP1. Interacts with MCRS1. Isoform 1 is expressed in brain. Isoform 2 is expressed in placenta and at low level in lung and liver. Isoform 3 is expressed in kidney and pancreas. Isoform 1 is expressed exclusively in brain.

Its subcellular location is the cytoplasm. It localises to the cytoskeleton. The protein resides in the microtubule organizing center. It is found in the centrosome. Functionally, involved in the regulation of neurogenesis. Negatively regulates neurite outgrowth. Involved in the morphogenesis of basket cells in the somatosensory cortex during embryogenesis. Involved in the positive regulation of oligodendrocyte differentiation during postnatal growth. Involved in dendritic arborization, morphogenesis of spine density dendrite, and establishment of postsynaptic dendrite density in cortical pyramidal neurons. Involved in homologous recombination (HR) repair pathway. Required for proper resolution of DNA double-strand breaks (DSBs) by HR. Is required for recovery of stalled replication forks, and directly contributes to genomic stability. Interacts with PARP1 and mediates MRE11-dependent DNA end resection during replication fork recovery. Contributes to genomic stability by preventing telomere dysfunction. The polypeptide is Protein ZNF365 (ZNF365) (Homo sapiens (Human)).